A 705-amino-acid chain; its full sequence is Solute carrier family 12 member 8 (705 aa).

A run of 11 helical transmembrane segments spans residues 38 to 58, 69 to 89, 92 to 112, 121 to 141, 159 to 179, 181 to 201, 232 to 252, 268 to 288, 306 to 326, 368 to 388, and 390 to 410; these read FGTW…VVLF, GVLL…ITVL, IGVA…ISSV, VGLL…TGFA, ISVA…KWII, LQLL…VGSF, FFTV…GFNM, LAAV…LGAV, LVGF…CMGG, LVTM…VVTI, and FMLT…AHCG. A disordered region spans residues 472 to 512; sequence ESRQLGSREGNNPKNQKRKGKKGAKQTLQDSFLLDPGSPLS. Basic residues predominate over residues 486 to 495; sequence NQKRKGKKGA. The next 2 helical transmembrane spans lie at 587-607 and 612-632; these read WVSL…QWLY and MGVA…LYLG.

This sequence belongs to the SLC12A transporter family.

The protein localises to the membrane. Functionally, cation/chloride cotransporter that may play a role in the control of keratinocyte proliferation. In Mus musculus (Mouse), this protein is Solute carrier family 12 member 8 (Slc12a8).